The sequence spans 257 residues: 4-hydroxy-tetrahydrodipicolinate reductase (257 aa).

NAD(+) contacts are provided by residues 11 to 16 (GANGRM) and glutamate 37. Arginine 38 contacts NADP(+). Residues 86 to 88 (GST) and 110 to 113 (SGNY) contribute to the NAD(+) site. Histidine 144 functions as the Proton donor/acceptor in the catalytic mechanism. Histidine 145 lines the (S)-2,3,4,5-tetrahydrodipicolinate pocket. Lysine 148 acts as the Proton donor in catalysis. 154–155 (GT) contacts (S)-2,3,4,5-tetrahydrodipicolinate.

Belongs to the DapB family.

The protein resides in the cytoplasm. The catalysed reaction is (S)-2,3,4,5-tetrahydrodipicolinate + NAD(+) + H2O = (2S,4S)-4-hydroxy-2,3,4,5-tetrahydrodipicolinate + NADH + H(+). It carries out the reaction (S)-2,3,4,5-tetrahydrodipicolinate + NADP(+) + H2O = (2S,4S)-4-hydroxy-2,3,4,5-tetrahydrodipicolinate + NADPH + H(+). It participates in amino-acid biosynthesis; L-lysine biosynthesis via DAP pathway; (S)-tetrahydrodipicolinate from L-aspartate: step 4/4. Functionally, catalyzes the conversion of 4-hydroxy-tetrahydrodipicolinate (HTPA) to tetrahydrodipicolinate. In Caulobacter vibrioides (strain ATCC 19089 / CIP 103742 / CB 15) (Caulobacter crescentus), this protein is 4-hydroxy-tetrahydrodipicolinate reductase.